We begin with the raw amino-acid sequence, 570 residues long: Mitoguardin 1 (570 aa).

The helical transmembrane segment at 34 to 54 (GLKKIIAVAAISGVSLIFLAC) threads the bilayer.

Belongs to the mitoguardin family. In terms of assembly, homodimer and heterodimer; forms heterodimers with miga2.

It is found in the mitochondrion outer membrane. Functionally, regulator of mitochondrial fusion: acts by forming homo- and heterodimers at the mitochondrial outer membrane and facilitating the formation of pld6/MitoPLD dimers. May act by regulating phospholipid metabolism via pld6/MitoPLD. In Xenopus laevis (African clawed frog), this protein is Mitoguardin 1.